Consider the following 345-residue polypeptide: KRR1 small subunit processome component homolog (345 aa).

Residues Asp-125 to Asn-193 form the KH domain. Residues Asn-232–Lys-245 are compositionally biased toward basic residues. Disordered regions lie at residues Asn-232–Val-260 and Gln-273–Ser-345. A coiled-coil region spans residues Phe-270–Arg-298. 2 stretches are compositionally biased toward basic and acidic residues: residues Lys-276–Asp-302 and Arg-315–Ala-330. Residues Leu-331–Ser-345 are compositionally biased toward basic residues.

The protein belongs to the KRR1 family. In terms of assembly, monomer. Component of the ribosomal small subunit (SSU) processome.

The protein resides in the nucleus. The protein localises to the nucleolus. Its function is as follows. Required for 40S ribosome biogenesis. Involved in nucleolar processing of pre-18S ribosomal RNA and ribosome assembly. Binds to RNA. Required for female germline development, cell viability during eye development and for survival of dividing cells and epithelial cells during early wing disk development. The protein is KRR1 small subunit processome component homolog (dbe) of Drosophila melanogaster (Fruit fly).